The primary structure comprises 176 residues: Inner membrane-spanning protein YciB (176 aa).

A run of 6 helical transmembrane segments spans residues 3 to 23 (FLFD…WGIF), 24 to 44 (TATA…AFRH), 49 to 69 (TMLW…LVLH), 72 to 92 (KFIQ…LLAA), 121 to 141 (LAWA…VHNF), and 149 to 169 (FKLF…SLWL).

It belongs to the YciB family.

It localises to the cell inner membrane. Plays a role in cell envelope biogenesis, maintenance of cell envelope integrity and membrane homeostasis. This is Inner membrane-spanning protein YciB from Burkholderia cenocepacia (strain ATCC BAA-245 / DSM 16553 / LMG 16656 / NCTC 13227 / J2315 / CF5610) (Burkholderia cepacia (strain J2315)).